The sequence spans 290 residues: MSPSAKKRPKNSRVSKMQDEKLRDETEQPVSKVIERNRLRTVLKNLSLLKLLKSSNRRIQELHKLAKRCWHSLLSVPKILRISSGENSACNKTKQNNEEFQEIGCSEKELKSKKLESTGDPKKKEYKEWKSQVQSGMRNKEKTSLAAMPRKEKHIEPEVPRTSRDDSLNPGVQGRQPLTEGPRVIFIKPYRNRTPMGHMKQLDVADQWIWFEGLPTRIHLPAPRVMCRSSTLRWVKRRCTRFCSASLEMPMWHPYKVDVTWTRARGASRGWRSRHQLKGRNGWRNSRVYK.

A compositionally biased stretch (basic residues) spans 1-13 (MSPSAKKRPKNSR). Disordered stretches follow at residues 1 to 29 (MSPS…TEQP) and 114 to 178 (KLES…RQPL). 3 stretches are compositionally biased toward basic and acidic residues: residues 16–26 (KMQDEKLRDET), 114–130 (KLES…KEWK), and 138–167 (RNKE…RDDS).

Interacts with p53/TP53. In terms of tissue distribution, highly expressed in heart, brain and small intestine. Less abundant in skeletal muscle, spleen, prostate, ovary and colon. A smaller transcript is expressed specifically in the testis.

It is found in the cytoplasm. The protein localises to the nucleus. Its function is as follows. May play a significant role in p53/TP53-mediating signaling pathway. In Homo sapiens (Human), this protein is TP53-target gene 5 protein (TP53TG5).